The primary structure comprises 125 residues: Histone H2B type 1 (125 aa).

The interval 1-36 (MPEPAKSRPAPKKGSKKAVTKAQKKDGKERKRSRKE) is disordered. Pro2 is subject to N-acetylproline. Glu3 carries the ADP-ribosyl glutamic acid modification. Lys6 is subject to N6-(2-hydroxyisobutyryl)lysine; alternate. Position 6 is an N6-(beta-hydroxybutyryl)lysine; alternate (Lys6). Lys6 carries the post-translational modification N6-acetyllysine; alternate. N6-butyryllysine; alternate is present on Lys6. At Lys6 the chain carries N6-crotonyllysine; alternate. An N6-lactoyllysine; alternate modification is found at Lys6. Lys6 participates in a covalent cross-link: Glycyl lysine isopeptide (Lys-Gly) (interchain with G-Cter in SUMO2); alternate. Ser7 carries the post-translational modification ADP-ribosylserine. Basic residues predominate over residues 9 to 19 (PAPKKGSKKAV). Lys12 carries the N6-(beta-hydroxybutyryl)lysine; alternate modification. N6-acetyllysine; alternate is present on residues Lys12 and Lys13. Residues Lys12 and Lys13 each carry the N6-crotonyllysine; alternate modification. Lys12 is modified (N6-lactoyllysine; alternate). At Lys13 the chain carries N6-(2-hydroxyisobutyryl)lysine; alternate. Ser15 carries the phosphoserine; by STK4/MST1 modification. An N6-acetyllysine; alternate mark is found at Lys16, Lys17, Lys21, and Lys24. Residues Lys16, Lys17, Lys21, and Lys24 each carry the N6-crotonyllysine; alternate modification. Lys16, Lys17, Lys21, and Lys24 each carry N6-lactoyllysine; alternate. Lys17 carries the N6-glutaryllysine; alternate modification. N6-(2-hydroxyisobutyryl)lysine; alternate occurs at positions 21 and 24. N6-(beta-hydroxybutyryl)lysine; alternate is present on Lys21. Lys21 carries the post-translational modification N6-butyryllysine; alternate. A Glycyl lysine isopeptide (Lys-Gly) (interchain with G-Cter in SUMO2); alternate cross-link involves residue Lys21. Lys25 is subject to N6-(2-hydroxyisobutyryl)lysine. At Lys35 the chain carries N6-(2-hydroxyisobutyryl)lysine; alternate. The residue at position 35 (Lys35) is an N6-(beta-hydroxybutyryl)lysine; alternate. N6-crotonyllysine; alternate is present on Lys35. An N6-glutaryllysine; alternate modification is found at Lys35. At Lys35 the chain carries N6-succinyllysine; alternate. Lys35 participates in a covalent cross-link: Glycyl lysine isopeptide (Lys-Gly) (interchain with G-Cter in ubiquitin); alternate. Glu36 is modified (polyADP-ribosyl glutamic acid). Position 37 is a phosphoserine; by AMPK (Ser37). Residues Lys44, Lys47, and Lys58 each carry the N6-(2-hydroxyisobutyryl)lysine; alternate modification. Lys44 carries the post-translational modification N6-lactoyllysine; alternate. An N6-glutaryllysine; alternate mark is found at Lys44 and Lys47. Lys47 bears the N6-methyllysine; alternate mark. Lys58 is modified (N6,N6-dimethyllysine; alternate). At Arg79 the chain carries Dimethylated arginine. Position 85 is an N6-(2-hydroxyisobutyryl)lysine; alternate (Lys85). The residue at position 85 (Lys85) is an N6-acetyllysine; alternate. Lys85 is subject to N6-lactoyllysine; alternate. At Lys85 the chain carries N6,N6,N6-trimethyllysine; alternate. Omega-N-methylarginine is present on residues Arg86 and Arg92. Lys108 is subject to N6-(2-hydroxyisobutyryl)lysine; alternate. The residue at position 108 (Lys108) is an N6-lactoyllysine; alternate. Position 108 is an N6-glutaryllysine; alternate (Lys108). Lys108 bears the N6-methyllysine; alternate mark. O-linked (GlcNAc) serine glycosylation is present at Ser112. The residue at position 115 (Thr115) is a Phosphothreonine. An N6-(2-hydroxyisobutyryl)lysine; alternate mark is found at Lys116 and Lys120. Lys116 bears the N6-(beta-hydroxybutyryl)lysine; alternate mark. Lys116 and Lys120 each carry N6-lactoyllysine; alternate. Lys116 and Lys120 each carry N6-glutaryllysine; alternate. An N6-succinyllysine; alternate mark is found at Lys116 and Lys120. An N6-methylated lysine; alternate modification is found at Lys116. Residue Lys120 forms a Glycyl lysine isopeptide (Lys-Gly) (interchain with G-Cter in ubiquitin); alternate linkage.

The protein belongs to the histone H2B family. In terms of assembly, the nucleosome is a histone octamer containing two molecules each of H2A, H2B, H3 and H4 assembled in one H3-H4 heterotetramer and two H2A-H2B heterodimers. The octamer wraps approximately 147 bp of DNA. In terms of processing, monoubiquitination at Lys-35 (H2BK34Ub) by the MSL1/MSL2 dimer is required for histone H3 'Lys-4' (H3K4me) and 'Lys-79' (H3K79me) methylation and transcription activation at specific gene loci, such as HOXA9 and MEIS1 loci. Similarly, monoubiquitination at Lys-120 (H2BK120Ub) by the RNF20/40 complex gives a specific tag for epigenetic transcriptional activation and is also prerequisite for histone H3 'Lys-4' and 'Lys-79' methylation. It also functions cooperatively with the FACT dimer to stimulate elongation by RNA polymerase II. H2BK120Ub also acts as a regulator of mRNA splicing: deubiquitination by USP49 is required for efficient cotranscriptional splicing of a large set of exons. Phosphorylated on Ser-15 (H2BS14ph) by STK4/MST1 during apoptosis; which facilitates apoptotic chromatin condensation. Also phosphorylated on Ser-15 in response to DNA double strand breaks (DSBs), and in correlation with somatic hypermutation and immunoglobulin class-switch recombination. Phosphorylation at Ser-37 (H2BS36ph) by AMPK in response to stress promotes transcription. Post-translationally, ADP-ribosylated by PARP1 or PARP2 on Ser-7 (H2BS6ADPr) in response to DNA damage. H2BS6ADPr promotes recruitment of CHD1L. Mono-ADP-ribosylated on Glu-3 (H2BE2ADPr) by PARP3 in response to single-strand breaks. Poly ADP-ribosylation on Glu-36 (H2BE35ADPr) by PARP1 regulates adipogenesis: it inhibits phosphorylation at Ser-37 (H2BS36ph), thereby blocking expression of pro-adipogenetic genes. In terms of processing, crotonylation (Kcr) is specifically present in male germ cells and marks testis-specific genes in post-meiotic cells, including X-linked genes that escape sex chromosome inactivation in haploid cells. Crotonylation marks active promoters and enhancers and confers resistance to transcriptional repressors. It is also associated with post-meiotically activated genes on autosomes. GlcNAcylation at Ser-112 promotes monoubiquitination of Lys-120. It fluctuates in response to extracellular glucose, and associates with transcribed genes. Post-translationally, lactylated in macrophages by EP300/P300 by using lactoyl-CoA directly derived from endogenous or exogenous lactate, leading to stimulates gene transcription.

Its subcellular location is the nucleus. The protein localises to the chromosome. Its function is as follows. Core component of nucleosome. Nucleosomes wrap and compact DNA into chromatin, limiting DNA accessibility to the cellular machineries which require DNA as a template. Histones thereby play a central role in transcription regulation, DNA repair, DNA replication and chromosomal stability. DNA accessibility is regulated via a complex set of post-translational modifications of histones, also called histone code, and nucleosome remodeling. In terms of biological role, has broad antibacterial activity. May contribute to the formation of the functional antimicrobial barrier of the colonic epithelium, and to the bactericidal activity of amniotic fluid. The protein is Histone H2B type 1 of Rattus norvegicus (Rat).